The following is a 278-amino-acid chain: Sulfur carrier protein FdhD (278 aa).

Catalysis depends on C121, which acts as the Cysteine persulfide intermediate. Residue 260 to 265 (FCKPGR) coordinates Mo-bis(molybdopterin guanine dinucleotide).

The protein belongs to the FdhD family.

It localises to the cytoplasm. Functionally, required for formate dehydrogenase (FDH) activity. Acts as a sulfur carrier protein that transfers sulfur from IscS to the molybdenum cofactor prior to its insertion into FDH. The protein is Sulfur carrier protein FdhD of Salmonella agona (strain SL483).